Consider the following 365-residue polypeptide: Protein AC54 (365 aa).

As to quaternary structure, interacts with C42 and VP80. Interacts with protein 38K.

The protein resides in the virion. In terms of biological role, structural protein that participates in nucleocapsid assembly. Plays an essential role in the proper localization of the major capsid protein VP39, and the minor capsid protein 38K into the capsid assembly site. The protein is Protein AC54 (AC54) of Lepidoptera (butterflies and moths).